Consider the following 158-residue polypeptide: Trafficking protein particle complex subunit 6B (158 aa).

The protein belongs to the TRAPP small subunits family. BET3 subfamily. Homodimer. Part of a TRAPP complex. Heterodimer with TRAPPC3. The heterodimer TRAPPC6B-TRAPPC3 interacts with TRAPPC1 likely providing a core for TRAPP complex formation. Widely expressed. Expressed in lung, heart, liver, spleen, brain and kidney.

It localises to the golgi apparatus. The protein resides in the cis-Golgi network. Its subcellular location is the endoplasmic reticulum. Functionally, component of a transport protein particle (TRAPP) complex that may function in specific stages of inter-organelle traffic. Specifically involved in the early development of neural circuitry, likely by controlling the frequency and amplitude of intracellular calcium transients implicated in the regulation of neuron differentiation and survival. This Mus musculus (Mouse) protein is Trafficking protein particle complex subunit 6B.